Reading from the N-terminus, the 338-residue chain is MRLADVAERFGATLDCPEHGDRPVLGVAPLETATATDISFLANPKYTALLQTTQAAAVFVRPDFQGEAACPLLRVPHPYLAFAKCIEWFYPQPKPVAKIHPTAILGADVVLGAEVTIGAYTVIGDRVRIGDRTVIDSHCTLYDDVVIGSDCRIYSHCALRERVQLGDRVILQNSVVLGSDGFGYVPLPDGRHYKIPQVGTVVIGNDVEIGAGTTIDRATLGETTVANGTKIDNLTMVAHNCTIGENAILCAQVGLAGSTHIGNHVVLAGQVGAAGHLTIGDRTVVSAKSGISSSVPPDSRMGGIPAMDQTLYLKVSAAVKQLPDLLKRVRKLEAKVGE.

The active-site Proton acceptor is the H239.

The protein belongs to the transferase hexapeptide repeat family. LpxD subfamily. As to quaternary structure, homotrimer.

It catalyses the reaction a UDP-3-O-[(3R)-3-hydroxyacyl]-alpha-D-glucosamine + a (3R)-hydroxyacyl-[ACP] = a UDP-2-N,3-O-bis[(3R)-3-hydroxyacyl]-alpha-D-glucosamine + holo-[ACP] + H(+). The protein operates within bacterial outer membrane biogenesis; LPS lipid A biosynthesis. Its function is as follows. Catalyzes the N-acylation of UDP-3-O-acylglucosamine using 3-hydroxyacyl-ACP as the acyl donor. Is involved in the biosynthesis of lipid A, a phosphorylated glycolipid that anchors the lipopolysaccharide to the outer membrane of the cell. This Thermosynechococcus vestitus (strain NIES-2133 / IAM M-273 / BP-1) protein is UDP-3-O-acylglucosamine N-acyltransferase.